A 231-amino-acid chain; its full sequence is MDARQMKIKAAEAALEHVESGMRLGIGTGSTAEEFVRLLAEKVASGFQISGVPTSERTARLCLELGVPLKSLDELPELDLTIDGADEVDGKLRLIKGGGGALLREKIVASASTRMIVIADESKVVDVLGAFKLPIEINPFGQVATRLAIEKTASRLGLAGEIVVRSSGDGVFMTDGGHLILDASFGRIPDADALAVELNAIPGVVEHGLFIDVASMAIIAGPEGARTLTAS.

Residues T28–T31, D83–D86, and K96–G99 each bind substrate. E105 acts as the Proton acceptor in catalysis. K123 is a binding site for substrate.

It belongs to the ribose 5-phosphate isomerase family. Homodimer.

It catalyses the reaction aldehydo-D-ribose 5-phosphate = D-ribulose 5-phosphate. The protein operates within carbohydrate degradation; pentose phosphate pathway; D-ribose 5-phosphate from D-ribulose 5-phosphate (non-oxidative stage): step 1/1. In terms of biological role, catalyzes the reversible conversion of ribose-5-phosphate to ribulose 5-phosphate. The polypeptide is Ribose-5-phosphate isomerase A (Rhizobium meliloti (strain 1021) (Ensifer meliloti)).